The chain runs to 120 residues: uncharacterized protein (120 aa).

The Nudix hydrolase domain maps to 29–120; that stretch reads QRQAAVLVPI…QVTPVVGIIP (92 aa). The Nudix box signature appears at 67–89; that stretch reads GAVDNSDATLIAAALREAQEEVA. Positions 83 and 87 each coordinate Mg(2+).

The protein belongs to the Nudix hydrolase family. PCD1 subfamily. Mn(2+) serves as cofactor. It depends on Mg(2+) as a cofactor.

Functionally, probably mediates the hydrolysis of some nucleoside diphosphate derivatives. This is an uncharacterized protein from Klebsiella aerogenes (Enterobacter aerogenes).